The sequence spans 148 residues: UPF0756 membrane protein ETA_17460 (148 aa).

Transmembrane regions (helical) follow at residues 14–34, 51–71, 80–100, and 112–132; these read ALSY…LIVI, MTVG…SGTI, FLHW…WLGG, and VVGG…GVPV.

Belongs to the UPF0756 family.

It is found in the cell membrane. This is UPF0756 membrane protein ETA_17460 from Erwinia tasmaniensis (strain DSM 17950 / CFBP 7177 / CIP 109463 / NCPPB 4357 / Et1/99).